Here is a 338-residue protein sequence, read N- to C-terminus: tRNA-specific 2-thiouridylase MnmA (338 aa).

Residues 6-13 and M32 each bind ATP; that span reads AMSGGVDS. C92 serves as the catalytic Nucleophile. A disulfide bridge connects residues C92 and C186. G116 contributes to the ATP binding site. Residues 134–136 form an interaction with tRNA region; it reads KDQ. C186 acts as the Cysteine persulfide intermediate in catalysis. The interaction with tRNA stretch occupies residues 288–289; it reads RY.

It belongs to the MnmA/TRMU family.

Its subcellular location is the cytoplasm. The enzyme catalyses S-sulfanyl-L-cysteinyl-[protein] + uridine(34) in tRNA + AH2 + ATP = 2-thiouridine(34) in tRNA + L-cysteinyl-[protein] + A + AMP + diphosphate + H(+). Functionally, catalyzes the 2-thiolation of uridine at the wobble position (U34) of tRNA, leading to the formation of s(2)U34. The polypeptide is tRNA-specific 2-thiouridylase MnmA (Campylobacter lari (strain RM2100 / D67 / ATCC BAA-1060)).